We begin with the raw amino-acid sequence, 193 residues long: Ion-translocating oxidoreductase complex subunit A (193 aa).

6 consecutive transmembrane segments (helical) span residues 5–25 (LMLF…FLGL), 39–59 (LGMG…AWLI), 62–82 (FILL…FIIA), 102–122 (LLGI…VALL), 134–154 (ALYG…FAAI), and 171–191 (SIAL…TGLV).

Belongs to the NqrDE/RnfAE family. The complex is composed of six subunits: RnfA, RnfB, RnfC, RnfD, RnfE and RnfG.

The protein resides in the cell inner membrane. In terms of biological role, part of a membrane-bound complex that couples electron transfer with translocation of ions across the membrane. The protein is Ion-translocating oxidoreductase complex subunit A of Sodalis glossinidius (strain morsitans).